Consider the following 884-residue polypeptide: Exocyst complex component 2 (884 aa).

Residues 1–11 show a composition bias toward basic and acidic residues; that stretch reads MEENAQARERL. A disordered region spans residues 1–27; that stretch reads MEENAQARERLPPTVTGLSPTEGVPGT. The region spanning 13 to 98 is the IPT/TIG domain; sequence PTVTGLSPTE…GSSNVKFRVF (86 aa). Coiled coils occupy residues 178-206 and 846-874; these read ADATIEDLRIAIKNMELSKQNEAKRSEEM and NQRLQQCLKNMRTTMRMALQSLEQHAENL.

Belongs to the SEC5 family. As to quaternary structure, the exocyst complex is composed of sec-3/exoc1, sec-5/exoc2, sec-6/exoc3, sec-8/exoc4, sec-10/exoc5, sec-15/exoc6, exo-70/exoc7 and exo-84/exoc8.

Component of the exocyst complex involved in the docking of exocytic vesicles with fusion sites on the plasma membrane. The protein is Exocyst complex component 2 (sec-5) of Caenorhabditis elegans.